Consider the following 608-residue polypeptide: Albumin 2 (608 aa).

Positions 1 to 14 are cleaved as a signal peptide; that stretch reads MQWLSVCSLLVLLS. A propeptide spanning residues 15–18 is cleaved from the precursor; sequence VLSR. 3 Albumin domains span residues 19–205, 206–398, and 402–600; these read SQAQ…TFQH, AIAK…AGSD, and KITD…KLVS. Cystine bridges form between C26–C72, C71–C80, C93–C108, C107–C118, C142–C187, C186–C195, C218–C264, C263–C271, C283–C299, C298–C309, C336–C381, C380–C389, C414–C460, C459–C471, C484–C500, C499–C510, C537–C582, and C581–C590. N501 carries an N-linked (GlcNAc...) asparagine glycan.

It belongs to the ALB/AFP/VDB family. Plasma.

It localises to the secreted. In terms of biological role, binds water, Ca(2+), Na(+), K(+), fatty acids, hormones, bilirubin and drugs. Its main function is the regulation of the colloidal osmotic pressure of blood. This chain is Albumin 2 (alb2), found in Salmo salar (Atlantic salmon).